The following is a 463-amino-acid chain: Tryptophan aminotransferase-related protein 4 (463 aa).

A helical transmembrane segment spans residues 6-26; the sequence is LLLIVSIILNLVFTIHILYYS. Pyridoxal 5'-phosphate-binding positions include Tyr-124, 163–164, Asn-239, 259–262, 282–285, and Arg-293; these read TT, DYAY, and SLSK. Lys-285 bears the N6-(pyridoxal phosphate)lysine mark.

Belongs to the alliinase family. The cofactor is pyridoxal 5'-phosphate.

The protein resides in the membrane. Functionally, probable aminotransferase. The polypeptide is Tryptophan aminotransferase-related protein 4 (TAR4) (Arabidopsis thaliana (Mouse-ear cress)).